A 596-amino-acid polypeptide reads, in one-letter code: Protein Malvolio (596 aa).

Positions 1–34 (MSSNEAYHEPGAGGDGPGGSSGASGGGSQRSNQL) are disordered. Gly residues predominate over residues 11–28 (GAGGDGPGGSSGASGGGS). Asparagine 41 carries N-linked (GlcNAc...) asparagine glycosylation. 7 helical membrane passes run 77–97 (LWAFTGPGFLMSIAYLDPGNI), 105–125 (AAAKYKILWVLLWATVLGLLM), 154–174 (WILWIMIEIAIIGSDMQEVIG), 186–206 (VVPLWGGVLITIVDTFTFLFL), 216–236 (FLFGTLITIMAVSFGYEYIVS), 263–283 (AVGVVGAVIMPHNLYLHSALV), and 309–329 (VALFVSFIINLFVVAVFAHGM). N-linked (GlcNAc...) asparagine glycosylation occurs at asparagine 359. Helical transmembrane passes span 373 to 393 (LFLGCTFGAVAMYIWGVGILA), 424 to 444 (VLVTRCIAIIPTFCLAMFSKM), 463 to 483 (PFAAIPTIAFTSCAAIMGEFV), 490 to 510 (IVSILLTIVVIGVNLYFVVVQ), and 520 to 540 (LLALVCIFAILYILFNLYLVI). The N-linked (GlcNAc...) asparagine glycan is linked to asparagine 574.

The protein belongs to the NRAMP family. Expressed in macrophages and in the nervous system.

It localises to the membrane. Functionally, putative transporter required for normal taste behavior. May be a nitrite/nitrate transporter. The protein is Protein Malvolio (Mvl) of Drosophila melanogaster (Fruit fly).